A 70-amino-acid polypeptide reads, in one-letter code: Putative antitoxin VapB34 (70 aa).

In terms of biological role, antitoxin component of a possible type II toxin-antitoxin (TA) system. The cognate toxin is VapC34. The polypeptide is Putative antitoxin VapB34 (vapB34) (Mycobacterium tuberculosis (strain CDC 1551 / Oshkosh)).